The chain runs to 184 residues: Large ribosomal subunit protein uL6 (184 aa).

The protein belongs to the universal ribosomal protein uL6 family. Part of the 50S ribosomal subunit.

In terms of biological role, this protein binds to the 23S rRNA, and is important in its secondary structure. It is located near the subunit interface in the base of the L7/L12 stalk, and near the tRNA binding site of the peptidyltransferase center. The polypeptide is Large ribosomal subunit protein uL6 (Thermotoga petrophila (strain ATCC BAA-488 / DSM 13995 / JCM 10881 / RKU-1)).